Consider the following 354-residue polypeptide: Serum paraoxonase/lactonase 3 (354 aa).

An intrachain disulfide couples cysteine 42 to cysteine 352. Asparagine 50 carries N-linked (GlcNAc...) asparagine glycosylation. Ca(2+) contacts are provided by glutamate 53 and aspartate 54. The active-site Proton acceptor is the histidine 114. Isoleucine 116 provides a ligand contact to Ca(2+). Serine 165 carries the post-translational modification Phosphoserine. Positions 167, 168, 223, 268, and 269 each coordinate Ca(2+). Asparagine 269 and asparagine 323 each carry an N-linked (GlcNAc...) asparagine glycan.

The protein belongs to the paraoxonase family. In terms of assembly, homodimer. The cofactor is Ca(2+). Post-translationally, glycosylated. In terms of processing, the signal sequence is not cleaved.

It localises to the secreted. Its subcellular location is the extracellular space. The enzyme catalyses a phenyl acetate + H2O = a phenol + acetate + H(+). The catalysed reaction is An aryl dialkyl phosphate + H2O = dialkyl phosphate + an aryl alcohol.. It catalyses the reaction an N-acyl-L-homoserine lactone + H2O = an N-acyl-L-homoserine + H(+). Has low activity towards the organophosphate paraxon and aromatic carboxylic acid esters. Rapidly hydrolyzes lactones such as statin prodrugs (e.g. lovastatin). Hydrolyzes aromatic lactones and 5- or 6-member ring lactones with aliphatic substituents but not simple lactones or those with polar substituents. The protein is Serum paraoxonase/lactonase 3 (Pon3) of Rattus norvegicus (Rat).